Reading from the N-terminus, the 339-residue chain is D-erythrose-4-phosphate dehydrogenase (339 aa).

Residues Arg12–Ile13 and Arg81 contribute to the NAD(+) site. Residues Ser154–Thr156, Arg200, Thr213–Lys214, and Arg236 contribute to the substrate site. Cys155 acts as the Nucleophile in catalysis. Asn318 is a binding site for NAD(+).

Belongs to the glyceraldehyde-3-phosphate dehydrogenase family. Epd subfamily. In terms of assembly, homotetramer.

It localises to the cytoplasm. It catalyses the reaction D-erythrose 4-phosphate + NAD(+) + H2O = 4-phospho-D-erythronate + NADH + 2 H(+). It participates in cofactor biosynthesis; pyridoxine 5'-phosphate biosynthesis; pyridoxine 5'-phosphate from D-erythrose 4-phosphate: step 1/5. Its function is as follows. Catalyzes the NAD-dependent conversion of D-erythrose 4-phosphate to 4-phosphoerythronate. This chain is D-erythrose-4-phosphate dehydrogenase, found in Escherichia coli (strain UTI89 / UPEC).